Consider the following 466-residue polypeptide: Asparagine--tRNA ligase (466 aa).

Belongs to the class-II aminoacyl-tRNA synthetase family. In terms of assembly, homodimer.

Its subcellular location is the cytoplasm. The enzyme catalyses tRNA(Asn) + L-asparagine + ATP = L-asparaginyl-tRNA(Asn) + AMP + diphosphate + H(+). The sequence is that of Asparagine--tRNA ligase from Shewanella sp. (strain MR-4).